We begin with the raw amino-acid sequence, 583 residues long: Selenocysteine-specific elongation factor (583 aa).

Positions 5–203 (RVNVNVGVLG…LLKSQISIPT (199 aa)) constitute a tr-type G domain. The G1 stretch occupies residues 14–21 (GHIDSGKT). GTP contacts are provided by Gly19, Thr21, and Ala22. A Mg(2+)-binding site is contributed by Thr21. Residues 46-50 (GITLD) are G2. The Mg(2+) site is built by Thr48 and Asp78. The tract at residues 78-81 (DCPG) is G3. The interval 132 to 135 (NKID) is G4. Asp135 and Lys173 together coordinate GTP. The G5 stretch occupies residues 171 to 173 (AAK). Residues 371 to 390 (MPTATEGDDEADPKAGHAPG) form a disordered region. Ser524 carries the phosphoserine modification. Residues 528–562 (KKILTPTLKKRSRAGRGETTKPEEGTERPEPIQPV) form a disordered region. Thr532 carries the phosphothreonine modification. The short motif at 534–540 (TLKKRSR) is the Nuclear localization signal element. Residues 542–557 (GRGETTKPEEGTERPE) show a composition bias toward basic and acidic residues. Residue Arg543 is modified to Omega-N-methylarginine.

The protein belongs to the TRAFAC class translation factor GTPase superfamily. Classic translation factor GTPase family. SelB subfamily. Requires Mg(2+) as cofactor. The cofactor is Mn(2+).

The protein resides in the cytoplasm. The protein localises to the nucleus. The enzyme catalyses GTP + H2O = GDP + phosphate + H(+). Its function is as follows. Translation factor required for the incorporation of the rare amino acid selenocysteine encoded by UGA codons. Replaces the eRF1-eRF3-GTP ternary complex for the insertion of selenocysteine directed by the UGA codon. Insertion of selenocysteine at UGA codons is mediated by SECISBP2 and EEFSEC: SECISBP2 (1) specifically binds the SECIS sequence once the 80S ribosome encounters an in-frame UGA codon and (2) contacts the RPS27A/eS31 of the 40S ribosome before ribosome stalling. (3) GTP-bound EEFSEC then delivers selenocysteinyl-tRNA(Sec) to the 80S ribosome and adopts a preaccommodated state conformation. (4) After GTP hydrolysis, EEFSEC dissociates from the assembly, selenocysteinyl-tRNA(Sec) accommodates, and peptide bond synthesis and selenoprotein elongation occur. The chain is Selenocysteine-specific elongation factor (Eefsec) from Mus musculus (Mouse).